Here is a 292-residue protein sequence, read N- to C-terminus: Elongation factor Ts (292 aa).

The involved in Mg(2+) ion dislocation from EF-Tu stretch occupies residues 82 to 85; sequence TDFV.

It belongs to the EF-Ts family.

It localises to the cytoplasm. In terms of biological role, associates with the EF-Tu.GDP complex and induces the exchange of GDP to GTP. It remains bound to the aminoacyl-tRNA.EF-Tu.GTP complex up to the GTP hydrolysis stage on the ribosome. In Bordetella avium (strain 197N), this protein is Elongation factor Ts.